We begin with the raw amino-acid sequence, 324 residues long: HPr kinase/phosphorylase (324 aa).

Catalysis depends on residues H146 and K167. 161 to 168 (GDSGLGKS) serves as a coordination point for ATP. S168 contributes to the Mg(2+) binding site. D185 (proton acceptor; for phosphorylation activity. Proton donor; for dephosphorylation activity) is an active-site residue. Residues 209 to 218 (LEVRGLGLLD) are important for the catalytic mechanism of both phosphorylation and dephosphorylation. E210 is a Mg(2+) binding site. R250 is an active-site residue. Residues 271–276 (QVAAGR) are important for the catalytic mechanism of dephosphorylation.

Belongs to the HPrK/P family. In terms of assembly, homohexamer. Mg(2+) is required as a cofactor.

The enzyme catalyses [HPr protein]-L-serine + ATP = [HPr protein]-O-phospho-L-serine + ADP + H(+). The catalysed reaction is [HPr protein]-O-phospho-L-serine + phosphate + H(+) = [HPr protein]-L-serine + diphosphate. Functionally, catalyzes the ATP- as well as the pyrophosphate-dependent phosphorylation of a specific serine residue in HPr, a phosphocarrier protein of the phosphoenolpyruvate-dependent sugar phosphotransferase system (PTS). HprK/P also catalyzes the pyrophosphate-producing, inorganic phosphate-dependent dephosphorylation (phosphorolysis) of seryl-phosphorylated HPr (P-Ser-HPr). The chain is HPr kinase/phosphorylase from Ralstonia nicotianae (strain ATCC BAA-1114 / GMI1000) (Ralstonia solanacearum).